The chain runs to 304 residues: N-acetyl-D-glucosamine kinase (304 aa).

ATP contacts are provided by residues 4–11 and 133–140; these read GLDIGGTK and GFGGGFVL. Positions 157, 178, 180, and 185 each coordinate Zn(2+).

Belongs to the ROK (NagC/XylR) family. NagK subfamily.

The enzyme catalyses N-acetyl-D-glucosamine + ATP = N-acetyl-D-glucosamine 6-phosphate + ADP + H(+). The protein operates within cell wall biogenesis; peptidoglycan recycling. In terms of biological role, catalyzes the phosphorylation of N-acetyl-D-glucosamine (GlcNAc) derived from cell-wall degradation, yielding GlcNAc-6-P. The polypeptide is N-acetyl-D-glucosamine kinase (Haemophilus influenzae (strain 86-028NP)).